The chain runs to 239 residues: Proteasome subunit beta (239 aa).

Residues M1–T16 show a composition bias toward polar residues. The disordered stretch occupies residues M1–L32. Positions M1 to G44 are cleaved as a propeptide — removed in mature form; by autocatalysis. Catalysis depends on T45, which acts as the Nucleophile.

It belongs to the peptidase T1B family. The 20S proteasome core is composed of 14 alpha and 14 beta subunits that assemble into four stacked heptameric rings, resulting in a barrel-shaped structure. The two inner rings, each composed of seven catalytic beta subunits, are sandwiched by two outer rings, each composed of seven alpha subunits. The catalytic chamber with the active sites is on the inside of the barrel. Has a gated structure, the ends of the cylinder being occluded by the N-termini of the alpha-subunits. Is capped at one or both ends by the proteasome regulatory ATPase, PAN.

The protein resides in the cytoplasm. The catalysed reaction is Cleavage of peptide bonds with very broad specificity.. With respect to regulation, the formation of the proteasomal ATPase PAN-20S proteasome complex, via the docking of the C-termini of PAN into the intersubunit pockets in the alpha-rings, triggers opening of the gate for substrate entry. Interconversion between the open-gate and close-gate conformations leads to a dynamic regulation of the 20S proteasome proteolysis activity. Functionally, component of the proteasome core, a large protease complex with broad specificity involved in protein degradation. In Natronomonas pharaonis (strain ATCC 35678 / DSM 2160 / CIP 103997 / JCM 8858 / NBRC 14720 / NCIMB 2260 / Gabara) (Halobacterium pharaonis), this protein is Proteasome subunit beta.